The following is a 332-amino-acid chain: Galactinol synthase 7 (332 aa).

Lysine 101 is an active-site residue. Mn(2+)-binding residues include aspartate 117, aspartate 119, and histidine 255.

The protein belongs to the glycosyltransferase 8 family. Galactosyltransferase subfamily. It depends on a divalent metal cation as a cofactor.

It is found in the cytoplasm. The enzyme catalyses myo-inositol + UDP-alpha-D-galactose = alpha-D-galactosyl-(1-&gt;3)-1D-myo-inositol + UDP + H(+). Galactinol synthase involved in the biosynthesis of raffinose family oligosaccharides (RFOs) that function as osmoprotectants. May promote plant stress tolerance. The polypeptide is Galactinol synthase 7 (GOLS7) (Arabidopsis thaliana (Mouse-ear cress)).